The sequence spans 43 residues: Protein PsbN (43 aa).

A helical membrane pass occupies residues 7-27 (FVVGILVALVLITAFAVYTAF).

The protein belongs to the PsbN family.

It localises to the cell inner membrane. May play a role in photosystem I and II biogenesis. This Gloeobacter violaceus (strain ATCC 29082 / PCC 7421) protein is Protein PsbN.